Here is a 213-residue protein sequence, read N- to C-terminus: Pyrrolidone-carboxylate peptidase (213 aa).

Catalysis depends on residues Glu78, Cys141, and His165.

Belongs to the peptidase C15 family. As to quaternary structure, homotetramer.

Its subcellular location is the cytoplasm. The catalysed reaction is Release of an N-terminal pyroglutamyl group from a polypeptide, the second amino acid generally not being Pro.. Functionally, removes 5-oxoproline from various penultimate amino acid residues except L-proline. The protein is Pyrrolidone-carboxylate peptidase of Alkaliphilus oremlandii (strain OhILAs) (Clostridium oremlandii (strain OhILAs)).